Consider the following 2148-residue polypeptide: General transcription factor 3C polypeptide 1 (2148 aa).

The segment covering 473–487 has biased composition (acidic residues); it reads GEEAFLSDSESEEES. Disordered stretches follow at residues 473–568 and 587–609; these read GEEA…FDPH and NPKE…KPHK. Basic residues predominate over residues 491–502; the sequence is GKRRGRGSRGHS. Residue K533 forms a Glycyl lysine isopeptide (Lys-Gly) (interchain with G-Cter in SUMO2) linkage. Position 666 is a phosphoserine (S666). Disordered regions lie at residues 717-771 and 818-863; these read STAN…EKMG and TGEQ…SSWE. Composition is skewed to basic and acidic residues over residues 759–770 and 825–835; these read ESTRVKKTDEKM and HSERKTGKQEP. Residues K769 and K832 each participate in a glycyl lysine isopeptide (Lys-Gly) (interchain with G-Cter in SUMO2) cross-link. Residue S1062 is modified to Phosphoserine. Residues 1186-1195 are compositionally biased toward basic and acidic residues; the sequence is EHFELDREPT. Disordered regions lie at residues 1186 to 1238, 1597 to 1627, 1823 to 1881, 1893 to 1928, and 2127 to 2148; these read EHFE…KKLR, KSLG…SVEV, KASG…LPAK, SPRP…ESVG, and PRPS…ATSR. Residue T1195 is modified to Phosphothreonine. A compositionally biased stretch (basic residues) spans 1198 to 1214; that stretch reads RNRKVRGGKSQKRKRLK. Positions 1228–1238 are enriched in basic and acidic residues; sequence EHPEAKSKKLR. Positions 1605 to 1616 are enriched in acidic residues; it reads LDDDDEEEDLDE. Phosphoserine is present on residues S1624, S1853, and S1893. Over residues 1903–1912 the composition is skewed to low complexity; sequence EAQAQFAAPE. Over residues 2132–2148 the composition is skewed to polar residues; sequence SCYQSSAQPSTGVATSR.

The protein belongs to the TFIIIC subunit 1 family. As to quaternary structure, part of the TFIIIC subcomplex TFIIIC2, consisting of six subunits, GTF3C1, GTF3C2, GTF3C3, GTF3C4, GTF3C5 and GTF3C6. Interacts with IGHMBP2. Interacts with MAF1.

Its subcellular location is the nucleus. In terms of biological role, required for RNA polymerase III-mediated transcription. Component of TFIIIC that initiates transcription complex assembly on tRNA and is required for transcription of 5S rRNA and other stable nuclear and cytoplasmic RNAs. Binds to the box B promoter element. The chain is General transcription factor 3C polypeptide 1 (Gtf3c1) from Rattus norvegicus (Rat).